A 242-amino-acid polypeptide reads, in one-letter code: Large ribosomal subunit protein uL1 (242 aa).

The protein belongs to the universal ribosomal protein uL1 family. As to quaternary structure, part of the 50S ribosomal subunit.

Functionally, binds directly to 23S rRNA. The L1 stalk is quite mobile in the ribosome, and is involved in E site tRNA release. Protein L1 is also a translational repressor protein, it controls the translation of the L11 operon by binding to its mRNA. In Streptomyces virginiae (Streptomyces cinnamonensis), this protein is Large ribosomal subunit protein uL1.